Consider the following 174-residue polypeptide: Small ribosomal subunit protein uS5 (174 aa).

Positions 16 to 79 (FSELIVSVRR…NAAKKNMIRV (64 aa)) constitute an S5 DRBM domain.

This sequence belongs to the universal ribosomal protein uS5 family. Part of the 30S ribosomal subunit. Contacts proteins S4 and S8.

With S4 and S12 plays an important role in translational accuracy. Its function is as follows. Located at the back of the 30S subunit body where it stabilizes the conformation of the head with respect to the body. In Ehrlichia canis (strain Jake), this protein is Small ribosomal subunit protein uS5.